The following is a 178-amino-acid chain: Lipid A deacylase PagL (178 aa).

An N-terminal signal peptide occupies residues 1–19 (MQFLKKNKPLFGIVTLALA). Active-site charge relay system residues include His154, Ser156, and Asp168.

It belongs to the PagL family. Homodimer.

It is found in the cell outer membrane. The catalysed reaction is a 3-(acyloxy)acyl derivative of bacterial toxin + H2O = a 3-hydroxyacyl derivative of bacterial toxin + a fatty acid + H(+). Functionally, has lipid A 3-O-deacylase activity. Hydrolyzes the ester bond at the 3 position of lipid A, a bioactive component of lipopolysaccharide (LPS), thereby releasing the primary fatty acyl moiety. In Bordetella bronchiseptica (strain ATCC BAA-588 / NCTC 13252 / RB50) (Alcaligenes bronchisepticus), this protein is Lipid A deacylase PagL.